The primary structure comprises 601 residues: Elongation factor 4 (601 aa).

In terms of domain architecture, tr-type G spans 6–188 (KFTRNFSIIA…AICYLLPPPV (183 aa)). Residues 18-23 (DHGKST) and 135-138 (NKID) contribute to the GTP site.

Belongs to the TRAFAC class translation factor GTPase superfamily. Classic translation factor GTPase family. LepA subfamily.

The protein localises to the cell inner membrane. The catalysed reaction is GTP + H2O = GDP + phosphate + H(+). Functionally, required for accurate and efficient protein synthesis under certain stress conditions. May act as a fidelity factor of the translation reaction, by catalyzing a one-codon backward translocation of tRNAs on improperly translocated ribosomes. Back-translocation proceeds from a post-translocation (POST) complex to a pre-translocation (PRE) complex, thus giving elongation factor G a second chance to translocate the tRNAs correctly. Binds to ribosomes in a GTP-dependent manner. In Leptospira biflexa serovar Patoc (strain Patoc 1 / Ames), this protein is Elongation factor 4.